Consider the following 403-residue polypeptide: Phosphopentomutase (403 aa).

Mn(2+) is bound by residues aspartate 13, aspartate 298, histidine 303, aspartate 339, histidine 340, and histidine 351.

Belongs to the phosphopentomutase family. It depends on Mn(2+) as a cofactor.

It is found in the cytoplasm. The catalysed reaction is 2-deoxy-alpha-D-ribose 1-phosphate = 2-deoxy-D-ribose 5-phosphate. The enzyme catalyses alpha-D-ribose 1-phosphate = D-ribose 5-phosphate. It functions in the pathway carbohydrate degradation; 2-deoxy-D-ribose 1-phosphate degradation; D-glyceraldehyde 3-phosphate and acetaldehyde from 2-deoxy-alpha-D-ribose 1-phosphate: step 1/2. Isomerase that catalyzes the conversion of deoxy-ribose 1-phosphate (dRib-1-P) and ribose 1-phosphate (Rib-1-P) to deoxy-ribose 5-phosphate (dRib-5-P) and ribose 5-phosphate (Rib-5-P), respectively. The protein is Phosphopentomutase of Streptococcus pyogenes serotype M28 (strain MGAS6180).